Consider the following 558-residue polypeptide: Formate--tetrahydrofolate ligase (558 aa).

67 to 74 contacts ATP; sequence TPAGEGKT.

Belongs to the formate--tetrahydrofolate ligase family.

It carries out the reaction (6S)-5,6,7,8-tetrahydrofolate + formate + ATP = (6R)-10-formyltetrahydrofolate + ADP + phosphate. It functions in the pathway one-carbon metabolism; tetrahydrofolate interconversion. This Ruegeria sp. (strain TM1040) (Silicibacter sp.) protein is Formate--tetrahydrofolate ligase.